Reading from the N-terminus, the 533-residue chain is Lymphocyte cytosolic protein 2 (533 aa).

One can recognise an SAM domain in the interval 15 to 81 (WDPDSLADYF…INKNEERRSI (67 aa)). Tyrosine 23 bears the Phosphotyrosine mark. A disordered region spans residues 78–417 (RRSIFTRKPQ…PPSPAEEENS (340 aa)). Residues 108–155 (FEEDDYESPNDDQDGEDDGDYESPNEEEEAPVEDDADYEPPPSNDEEA) show a composition bias toward acidic residues. Pro residues predominate over residues 184-213 (QQPPVPPQRPMAALPPPPAGRNHSPLPPPQ). Serine 207 bears the Phosphoserine mark. Polar residues-rich tracts occupy residues 337–350 (MSSN…TKPS) and 365–376 (SESNSSFPQSAS). A phosphoserine mark is found at serine 376 and serine 410. Pro residues predominate over residues 400–411 (LPLPNKPRPPSP). The 109-residue stretch at 422-530 (WYVSYITRPE…RYQCTLTHAA (109 aa)) folds into the SH2 domain.

As to quaternary structure, interacts with SLA. Interacts with CBLB. Interacts with GRB2. Interacts with SHB. Interacts with PRAM1. Interacts (via SH2 domain) with CD6 (via tyrosine phosphorylated C-terminus). Interacts with FYB1 and the phosphorylated form of FYB2. Interacts with 14-3-3 adapter/YWHAZ; this phosphorylation leads to YWHAZ proteolytic degradation. Interacts with VAV1; this interaction plays a role in TCR-mediated cytokine production. Interacts with AGER; this interaction plays an important role in AGER-mediated pro-inflammatory responses and cytokine release. In terms of processing, phosphorylated after T-cell receptor activation by ZAP70, ITK and TXK, which leads to the up-regulation of Th1 preferred cytokine IL-2. SYK-dependent phosphorylation is required for recruitment of PI3K signaling components. As to expression, highly expressed in spleen, thymus and peripheral blood leukocytes. Highly expressed also in T-cell and monocytic cell lines, expressed at lower level in B-cell lines. Not detected in fibroblast or neuroblastoma cell lines.

Its subcellular location is the cytoplasm. Its function is as follows. Adapter protein primarily involved in signaling pathways within T-cells, as well as other immune cells such as platelets, mast cells, and natural killer (NK) cells. Plays a crucial role for transducing signal from the T-cell receptor (TCR) after antigen recognition leading to T-cell activation. Mechanistically, once phosphorylated by the kinase ZAP70, mediates interactions with the guanine-nucleotide exchange factor VAV1, the adapter protein NCK and the kinase ITK. In turn, stimulates the activation of PKC-theta/PRKCQ and NF-kappa-B transcriptional activity in response to CD3 and CD28 costimulation. Also plays an essential role in AGER-induced signaling pathways including p38 MAPK and ERK1/2 activation leading to cytokine release and pro-inflammatory responses. The protein is Lymphocyte cytosolic protein 2 (LCP2) of Homo sapiens (Human).